Here is a 361-residue protein sequence, read N- to C-terminus: tRNA pseudouridine synthase D (361 aa).

The active-site Nucleophile is the D76. One can recognise a TRUD domain in the interval 151-318; the sequence is GIPNYFGYQR…EQGSRRLAWI (168 aa).

It belongs to the pseudouridine synthase TruD family.

It carries out the reaction uridine(13) in tRNA = pseudouridine(13) in tRNA. Its function is as follows. Responsible for synthesis of pseudouridine from uracil-13 in transfer RNAs. The chain is tRNA pseudouridine synthase D from Wolinella succinogenes (strain ATCC 29543 / DSM 1740 / CCUG 13145 / JCM 31913 / LMG 7466 / NCTC 11488 / FDC 602W) (Vibrio succinogenes).